Here is a 406-residue protein sequence, read N- to C-terminus: WD repeat and SOCS box-containing protein 2 (406 aa).

Residues 70–89 (AKSRSSKNETKGRGSPKEKT) form a disordered region. WD repeat units follow at residues 107 to 150 (PPSK…LLLN), 153 to 193 (GHQD…KQIQ), 197 to 236 (GHLQWVYCCSISPDCSMLCSAAGEKSVFLWSMRSYTLIRK), 239 to 278 (GHQSSVVSCDFSPDSALLVTASYDTNVIMWDPYTGERLRS), and 293 to 332 (VHISSLRSVCFSPEGLYLATVADDRLLRIWALELKTPIAF). Positions 358–406 (HVQFWTAPRVLSSLKHLCRKALRSFLTTYQVLALPIPKKMKEFLTYRTF) constitute an SOCS box domain.

The protein operates within protein modification; protein ubiquitination. Its function is as follows. May be a substrate-recognition component of a SCF-like ECS (Elongin-Cullin-SOCS-box protein) E3 ubiquitin ligase complex which mediates the ubiquitination and subsequent proteasomal degradation of target proteins. In Bos taurus (Bovine), this protein is WD repeat and SOCS box-containing protein 2 (WSB2).